Consider the following 396-residue polypeptide: Elongation factor Tu 2 (396 aa).

Residues 10–206 enclose the tr-type G domain; the sequence is KPHINVGTIG…VLDSYIPEPQ (197 aa). Residues 19-26 form a G1 region; that stretch reads GHVDHGKT. 19-26 is a GTP binding site; that stretch reads GHVDHGKT. Residue Thr26 participates in Mg(2+) binding. The tract at residues 60 to 64 is G2; sequence GITIN. Residues 81 to 84 are G3; sequence DCPG. GTP contacts are provided by residues 81-85 and 136-139; these read DCPGH and NKAD. The G4 stretch occupies residues 136–139; sequence NKAD. Residues 174 to 176 are G5; the sequence is SAL.

Belongs to the TRAFAC class translation factor GTPase superfamily. Classic translation factor GTPase family. EF-Tu/EF-1A subfamily. As to quaternary structure, monomer.

The protein resides in the cytoplasm. The enzyme catalyses GTP + H2O = GDP + phosphate + H(+). Functionally, GTP hydrolase that promotes the GTP-dependent binding of aminoacyl-tRNA to the A-site of ribosomes during protein biosynthesis. This is Elongation factor Tu 2 from Nitrosomonas eutropha (strain DSM 101675 / C91 / Nm57).